Here is a 182-residue protein sequence, read N- to C-terminus: MGKEVFLLDDQGIKRALTRIAHEIIEKNKGAKDIILVGIRTRGVPLAKRLAQRIDQIEGEIVPVGMLDITLYRDDLTKDENDPIVHGSSIDSEINDKIVILVDDVLYTGRTARAALDALVDLGRPKMVQLAVLIDRGHRELPIRADYVGKNVPTSKEEIVRVSLMEIDKKDSVMLEGSKNVV.

Positions 99-111 (VILVDDVLYTGRT) match the PRPP-binding motif.

The protein belongs to the purine/pyrimidine phosphoribosyltransferase family. PyrR subfamily. As to quaternary structure, homodimer and homohexamer; in equilibrium.

The enzyme catalyses UMP + diphosphate = 5-phospho-alpha-D-ribose 1-diphosphate + uracil. In terms of biological role, regulates transcriptional attenuation of the pyrimidine nucleotide (pyr) operon by binding in a uridine-dependent manner to specific sites on pyr mRNA. This disrupts an antiterminator hairpin in the RNA and favors formation of a downstream transcription terminator, leading to a reduced expression of downstream genes. Functionally, also displays a weak uracil phosphoribosyltransferase activity which is not physiologically significant. The sequence is that of Bifunctional protein PyrR from Alkaliphilus metalliredigens (strain QYMF).